The primary structure comprises 814 residues: Phenylalanine--tRNA ligase beta subunit (814 aa).

Residues 39–153 (SARAKGVVVG…ELPALGAPVA (115 aa)) enclose the tRNA-binding domain. Positions 414–498 (ADASSVLLRR…RLVGFDRFGA (85 aa)) constitute a B5 domain. Mg(2+) contacts are provided by Asp476, Asp482, Glu485, and Glu486. The FDX-ACB domain maps to 720–813 (PTVPASERDL…LVKQHGAELR (94 aa)).

The protein belongs to the phenylalanyl-tRNA synthetase beta subunit family. Type 1 subfamily. As to quaternary structure, tetramer of two alpha and two beta subunits. Requires Mg(2+) as cofactor.

It is found in the cytoplasm. The catalysed reaction is tRNA(Phe) + L-phenylalanine + ATP = L-phenylalanyl-tRNA(Phe) + AMP + diphosphate + H(+). The polypeptide is Phenylalanine--tRNA ligase beta subunit (Parasynechococcus marenigrum (strain WH8102)).